The chain runs to 313 residues: Malate dehydrogenase (313 aa).

NAD(+) is bound by residues 11–16 (GAGNIG) and D35. Substrate-binding residues include R84 and R90. NAD(+) contacts are provided by residues N97 and 120 to 122 (VTN). Substrate-binding residues include N122 and R153. The active-site Proton acceptor is the H177.

The protein belongs to the LDH/MDH superfamily. MDH type 3 family.

The enzyme catalyses (S)-malate + NAD(+) = oxaloacetate + NADH + H(+). Functionally, catalyzes the reversible oxidation of malate to oxaloacetate. This is Malate dehydrogenase from Ehrlichia canis (strain Jake).